We begin with the raw amino-acid sequence, 255 residues long: Putative mediator of RNA polymerase II transcription subunit 30 (255 aa).

The span at 58–107 (QSQQLQQPQSIPSSTNNSTNTNTNNSTTTTTTSSTSSTTTPTTTTSTTSP) shows a compositional bias: low complexity. 2 disordered regions span residues 58-133 (QSQQ…TLNL) and 177-207 (NIDN…IEKQ). The span at 108–133 (LNSKDSTATTTTKEQPSSPTLPTLNL) shows a compositional bias: polar residues. The span at 177–189 (NIDNDDTIMKDDN) shows a compositional bias: basic and acidic residues. The span at 190–201 (NNSSTSAPTTTT) shows a compositional bias: low complexity.

Belongs to the Mediator complex subunit 30 family. Highly divergent. As to quaternary structure, component of the Mediator complex.

The protein localises to the nucleus. Component of the Mediator complex, a coactivator involved in the regulated transcription of nearly all RNA polymerase II-dependent genes. Mediator functions as a bridge to convey information from gene-specific regulatory proteins to the basal RNA polymerase II transcription machinery. Mediator is recruited to promoters by direct interactions with regulatory proteins and serves as a scaffold for the assembly of a functional preinitiation complex with RNA polymerase II and the general transcription factors. This chain is Putative mediator of RNA polymerase II transcription subunit 30 (med30), found in Dictyostelium discoideum (Social amoeba).